Reading from the N-terminus, the 213-residue chain is Orotate phosphoribosyltransferase (213 aa).

Lysine 26 provides a ligand contact to 5-phospho-alpha-D-ribose 1-diphosphate. An orotate-binding site is contributed by 34-35 (FF). 5-phospho-alpha-D-ribose 1-diphosphate is bound by residues 72 to 73 (YK), arginine 99, lysine 100, lysine 103, histidine 105, and 124 to 132 (DDVITAGTA). Orotate is bound by residues threonine 128 and arginine 156.

Belongs to the purine/pyrimidine phosphoribosyltransferase family. PyrE subfamily. Homodimer. It depends on Mg(2+) as a cofactor.

It catalyses the reaction orotidine 5'-phosphate + diphosphate = orotate + 5-phospho-alpha-D-ribose 1-diphosphate. The protein operates within pyrimidine metabolism; UMP biosynthesis via de novo pathway; UMP from orotate: step 1/2. Its function is as follows. Catalyzes the transfer of a ribosyl phosphate group from 5-phosphoribose 1-diphosphate to orotate, leading to the formation of orotidine monophosphate (OMP). The polypeptide is Orotate phosphoribosyltransferase (Photorhabdus laumondii subsp. laumondii (strain DSM 15139 / CIP 105565 / TT01) (Photorhabdus luminescens subsp. laumondii)).